Here is a 405-residue protein sequence, read N- to C-terminus: Phosphopentomutase (405 aa).

Residues Asp10, Asp303, His308, Asp344, His345, and His356 each contribute to the Mn(2+) site.

This sequence belongs to the phosphopentomutase family. Requires Mn(2+) as cofactor.

Its subcellular location is the cytoplasm. It catalyses the reaction 2-deoxy-alpha-D-ribose 1-phosphate = 2-deoxy-D-ribose 5-phosphate. The catalysed reaction is alpha-D-ribose 1-phosphate = D-ribose 5-phosphate. The protein operates within carbohydrate degradation; 2-deoxy-D-ribose 1-phosphate degradation; D-glyceraldehyde 3-phosphate and acetaldehyde from 2-deoxy-alpha-D-ribose 1-phosphate: step 1/2. In terms of biological role, isomerase that catalyzes the conversion of deoxy-ribose 1-phosphate (dRib-1-P) and ribose 1-phosphate (Rib-1-P) to deoxy-ribose 5-phosphate (dRib-5-P) and ribose 5-phosphate (Rib-5-P), respectively. In Shewanella frigidimarina (strain NCIMB 400), this protein is Phosphopentomutase.